The primary structure comprises 160 residues: MKIAVIQGPNLNMLGVREQQIYGSMKLEQIHAQMRDFAAQSGLEIEFFQSNLEGEIVDKIQECYGDVNGIIINAAAYTHTSIAIRDAISAVNLPTVEVHISNINRREEFRKQNMIAPVCTSSIVGFGPFGYHLAMVGMIQILNEIKAVQEMQKQQAPQAE.

Residue Tyr-22 is the Proton acceptor of the active site. Substrate-binding residues include Asn-73, His-79, and Asp-86. His-99 acts as the Proton donor in catalysis. Substrate is bound by residues 100–101 and Arg-110; that span reads IS.

The protein belongs to the type-II 3-dehydroquinase family. As to quaternary structure, homododecamer.

The catalysed reaction is 3-dehydroquinate = 3-dehydroshikimate + H2O. It participates in metabolic intermediate biosynthesis; chorismate biosynthesis; chorismate from D-erythrose 4-phosphate and phosphoenolpyruvate: step 3/7. Functionally, catalyzes a trans-dehydration via an enolate intermediate. The sequence is that of 3-dehydroquinate dehydratase from Sulfurimonas denitrificans (strain ATCC 33889 / DSM 1251) (Thiomicrospira denitrificans (strain ATCC 33889 / DSM 1251)).